A 98-amino-acid chain; its full sequence is NADH-ubiquinone oxidoreductase chain 4L (98 aa).

Helical transmembrane passes span 1 to 21 (MPIIYMNITLAFIISLLGMLV), 29 to 49 (SLLCLEGMMLSLFMMSTLMAL), and 61 to 81 (IALLVFAACEAAVGLALLVSI).

This sequence belongs to the complex I subunit 4L family. In terms of assembly, core subunit of respiratory chain NADH dehydrogenase (Complex I) which is composed of 45 different subunits.

The protein localises to the mitochondrion inner membrane. The catalysed reaction is a ubiquinone + NADH + 5 H(+)(in) = a ubiquinol + NAD(+) + 4 H(+)(out). Core subunit of the mitochondrial membrane respiratory chain NADH dehydrogenase (Complex I) which catalyzes electron transfer from NADH through the respiratory chain, using ubiquinone as an electron acceptor. Part of the enzyme membrane arm which is embedded in the lipid bilayer and involved in proton translocation. This Piliocolobus badius (Western red colobus) protein is NADH-ubiquinone oxidoreductase chain 4L (MT-ND4L).